A 509-amino-acid polypeptide reads, in one-letter code: MFS transporter fsdG (509 aa).

N-linked (GlcNAc...) asparagine glycosylation is found at N8 and N26. 4 consecutive transmembrane segments (helical) span residues 63 to 83 (FLIH…ATTM), 103 to 123 (IALT…VTSP), 139 to 159 (IFFL…MFIA), and 162 to 182 (FLAG…IADF). N-linked (GlcNAc...) asparagine glycosylation occurs at N189. Helical transmembrane passes span 195-215 (LFAL…GFVA), 222-242 (WTFR…CIFL), 298-318 (LIFL…FGLI), and 341-361 (GLSY…FNFI). N-linked (GlcNAc...) asparagine glycosylation occurs at N367. The next 4 helical transmembrane spans lie at 380–400 (YLPL…WYGW), 408–428 (WVVP…IIMP), 442–462 (AASV…FLPL), and 474–494 (GWGN…PAIF).

This sequence belongs to the major facilitator superfamily.

The protein resides in the cell membrane. Efflux pump that might be required for efficient secretion of fusaridione A or other secondary metabolies produced by the fusaridione A gene cluster. This chain is MFS transporter fsdG, found in Fusarium heterosporum.